The following is a 319-amino-acid chain: tRNA pseudouridine synthase B (319 aa).

Asp-47 acts as the Nucleophile in catalysis.

Belongs to the pseudouridine synthase TruB family. Type 1 subfamily.

The enzyme catalyses uridine(55) in tRNA = pseudouridine(55) in tRNA. Its function is as follows. Responsible for synthesis of pseudouridine from uracil-55 in the psi GC loop of transfer RNAs. This is tRNA pseudouridine synthase B from Pseudoalteromonas translucida (strain TAC 125).